We begin with the raw amino-acid sequence, 176 residues long: Ribosome rescue factor SmrB (176 aa).

The 76-residue stretch at 98-173 (LDVHGLNQDQ…RSTAILFLIH (76 aa)) folds into the Smr domain.

This sequence belongs to the SmrB family. As to quaternary structure, associates with collided ribosomes, but not with correctly translating polysomes.

In terms of biological role, acts as a ribosome collision sensor. Detects stalled/collided disomes (pairs of ribosomes where the leading ribosome is stalled and a second ribosome has collided with it) and endonucleolytically cleaves mRNA at the 5' boundary of the stalled ribosome. Stalled/collided disomes form a new interface (primarily via the 30S subunits) that binds SmrB. Cleaved mRNA becomes available for tmRNA ligation, leading to ribosomal subunit dissociation and rescue of stalled ribosomes. In Buchnera aphidicola subsp. Baizongia pistaciae (strain Bp), this protein is Ribosome rescue factor SmrB.